We begin with the raw amino-acid sequence, 330 residues long: MPKVNENSFKKIEKDVLKLLPPRPHKIEISEGQKFAKSIRQALSKYVTSVNHPIDFFSNQMLDVPFRQPLYADFLIQAKTIHQKEPIGSFLFTFKQEDSGSSIDIIFSPVSFYKISGLDAEFAPSVHRISFVWYGADNCIEDTVPNLAELIEEGKFHQFLTPVGPLVENITSTFVTRIKSVVKGEVLNNKSPPENVKLLLPSDLFIDLDEPNIDTLAPKHLLSFYYACVTYPVLHNVPVMALTFIKSNKSIRDLFCHLKVIYSDIIRTKYIAMQNDFYINKMSFGALCKLGSSSSETVPRRGNYHFRGSSLPTVEVPDFVADPGPWMTIL.

Belongs to the herpesviridae TRX1 protein family. As to quaternary structure, interacts with TRX2, MCP and capsid vertex component 2/CVC2.

It is found in the virion. It localises to the host nucleus. In terms of biological role, structural component of the T=16 icosahedral capsid. The capsid is composed of pentamers and hexamers of major capsid protein/MCP, which are linked together by heterotrimers called triplexes. These triplexes are formed by a single molecule of triplex protein 1/TRX1 and two copies of triplex protein 2/TRX2. Additionally, TRX1 is required for efficient transport of TRX2 to the nucleus, which is the site of capsid assembly. This chain is Triplex capsid protein 1, found in Saimiriine herpesvirus 2 (strain 11) (SaHV-2).